A 200-amino-acid chain; its full sequence is Holliday junction branch migration complex subunit RuvA (200 aa).

The tract at residues 1-64 (MFTYFRGELI…EDLMQLFGFL (64 aa)) is domain I. The interval 65–143 (EEEERQLFRL…KLRPSGGTKS (79 aa)) is domain II. Residues 144 to 148 (VSRLS) are flexible linker. Residues 148–200 (SESSMRDDAVNALVTLGFLRSVAQKAVTESLTSLRNPQVEDLVRDALLTIRTP) form a domain III region.

The protein belongs to the RuvA family. Homotetramer. Forms an RuvA(8)-RuvB(12)-Holliday junction (HJ) complex. HJ DNA is sandwiched between 2 RuvA tetramers; dsDNA enters through RuvA and exits via RuvB. An RuvB hexamer assembles on each DNA strand where it exits the tetramer. Each RuvB hexamer is contacted by two RuvA subunits (via domain III) on 2 adjacent RuvB subunits; this complex drives branch migration. In the full resolvosome a probable DNA-RuvA(4)-RuvB(12)-RuvC(2) complex forms which resolves the HJ.

It is found in the cytoplasm. Its function is as follows. The RuvA-RuvB-RuvC complex processes Holliday junction (HJ) DNA during genetic recombination and DNA repair, while the RuvA-RuvB complex plays an important role in the rescue of blocked DNA replication forks via replication fork reversal (RFR). RuvA specifically binds to HJ cruciform DNA, conferring on it an open structure. The RuvB hexamer acts as an ATP-dependent pump, pulling dsDNA into and through the RuvAB complex. HJ branch migration allows RuvC to scan DNA until it finds its consensus sequence, where it cleaves and resolves the cruciform DNA. The sequence is that of Holliday junction branch migration complex subunit RuvA from Chlorobium phaeobacteroides (strain BS1).